Here is a 149-residue protein sequence, read N- to C-terminus: H/ACA ribonucleoprotein complex subunit 2-like protein (149 aa).

The protein belongs to the eukaryotic ribosomal protein eL8 family. In terms of assembly, component of the small nucleolar ribonucleoprotein particle containing H/ACA-type snoRNAs (H/ACA snoRNPs). Component of the telomerase holoenzyme complex.

It is found in the nucleus. The protein localises to the nucleolus. Functionally, required for ribosome biogenesis. Part of a complex which catalyzes pseudouridylation of rRNA. This involves the isomerization of uridine such that the ribose is subsequently attached to C5, instead of the normal N1. Pseudouridine ('psi') residues may serve to stabilize the conformation of rRNAs. This Xenopus laevis (African clawed frog) protein is H/ACA ribonucleoprotein complex subunit 2-like protein (nhp2).